The primary structure comprises 298 residues: Transcription factor bHLH114 (298 aa).

The stretch at 117 to 149 (LDHEIRNHKSSKEQITQDYKNLTSKRSEELEEN) forms a coiled coil. Positions 126–154 (SSKEQITQDYKNLTSKRSEELEENSDEYS) are disordered. The span at 129–140 (EQITQDYKNLTS) shows a compositional bias: polar residues. In terms of domain architecture, bHLH spans 163 to 212 (LETLSPLPSFKVRKEKLGDRITALQQLVSPFGKTDTASVLNEAVEYIKFL).

In terms of assembly, homodimer. As to expression, differentiating root endodermis.

It localises to the nucleus. The protein is Transcription factor bHLH114 (BHLH114) of Arabidopsis thaliana (Mouse-ear cress).